A 143-amino-acid polypeptide reads, in one-letter code: MIDISGKDIVLREAIAEGFIKLKKDTIEKITKREIEKGDVIATAKVAGILAAKKTHELLPMCHPIPLEYINVEIEIENDGLKVVSTVRAHYRTGVEMEALTATSIALLTIWDMVKKYEKDEEGQYPLTEISKIRVVSKIKSYG.

Residues 61-63 (MCH) and 97-98 (ME) contribute to the substrate site. Asp-112 is an active-site residue.

This sequence belongs to the MoaC family. Homohexamer; trimer of dimers.

It carries out the reaction (8S)-3',8-cyclo-7,8-dihydroguanosine 5'-triphosphate = cyclic pyranopterin phosphate + diphosphate. It participates in cofactor biosynthesis; molybdopterin biosynthesis. In terms of biological role, catalyzes the conversion of (8S)-3',8-cyclo-7,8-dihydroguanosine 5'-triphosphate to cyclic pyranopterin monophosphate (cPMP). This Sulfolobus acidocaldarius (strain ATCC 33909 / DSM 639 / JCM 8929 / NBRC 15157 / NCIMB 11770) protein is Probable cyclic pyranopterin monophosphate synthase.